Reading from the N-terminus, the 72-residue chain is FPQPQEPFPQQPQQPFPLQPQQPFPQQPQQPFPQPQQPFRQQAELIIPQQPQQPFPLQPHQPYTQQTIWSMV.

Residues 1–36 (FPQPQEPFPQQPQQPFPLQPQQPFPQQPQQPFPQPQ) show a composition bias toward pro residues. The interval 1-61 (FPQPQEPFPQ…QQPFPLQPHQ (61 aa)) is disordered. Over residues 37 to 50 (QPFRQQAELIIPQQ) the composition is skewed to low complexity.

Developing endosperm.

Sulfur-poor seed storage protein. The sequence is that of C-hordein from Hordeum vulgare (Barley).